The primary structure comprises 353 residues: MSEEQFGGDGAAAAATAAVGGSAGEQEGAMVAAAQGAAAAAGSGSGGGSAPGGTEGGSTEAEGAKIDASKNEEDEGHSNSSPRHTEAATAQREEWKMFIGGLSWDTTKKDLKDYFSKFGDVVDCTLKLDPITGRSRGFGFVLFKESESVDKVMDQKEHKLNGKVIDPKRAKAMKTKEPVKKIFVGGLSPDTPEEKIREYFGGFGEVESIELPMDNKTNKRRGFCFITFKEEEPVKKIMEKKYHNVGLSKCEIKVAMSKEQYQQQQQWGSRGGFAGRARGRGGGPSQNWNQGYSNYWNQGYGSYGYNSQGYGGYGGYDYTGYNSYYGYGDYSNQQSGYGKVSRRGGHQNSYKPY.

The interval 1-89 is disordered; it reads MSEEQFGGDG…SSPRHTEAAT (89 aa). Ser2 carries the post-translational modification N-acetylserine. Residues 11–42 are compositionally biased toward low complexity; that stretch reads AAAAATAAVGGSAGEQEGAMVAAAQGAAAAAG. Residues 43–56 are compositionally biased toward gly residues; sequence SGSGGGSAPGGTEG. A compositionally biased stretch (basic and acidic residues) spans 62–71; it reads EGAKIDASKN. Position 69 is a phosphoserine (Ser69). Lys70 participates in a covalent cross-link: Glycyl lysine isopeptide (Lys-Gly) (interchain with G-Cter in SUMO2). Residues Ser78, Ser80, and Ser81 each carry the phosphoserine modification. The residue at position 89 (Thr89) is a Phosphothreonine. RRM domains are found at residues 95–177 and 180–259; these read WKMF…KTKE and KKIF…MSKE. Lys117 is subject to N6-methyllysine. Thr125 carries the post-translational modification Phosphothreonine. Residue Lys127 forms a Glycyl lysine isopeptide (Lys-Gly) (interchain with G-Cter in SUMO2) linkage. Lys163 bears the N6-acetyllysine mark. Position 188 is a phosphoserine (Ser188). The residue at position 191 (Thr191) is a Phosphothreonine. Residue Lys195 forms a Glycyl lysine isopeptide (Lys-Gly) (interchain with G-Cter in SUMO2) linkage. N6-acetyllysine is present on residues Lys241 and Lys249. A Phosphoserine modification is found at Ser269. Omega-N-methylarginine occurs at positions 270, 276, 278, and 280. Arg343 is subject to Asymmetric dimethylarginine; alternate. Arg343 is subject to Dimethylated arginine; alternate. Omega-N-methylarginine; alternate is present on Arg343.

Identified in a IGF2BP1-dependent mRNP granule complex containing untranslated mRNAs. Part of a complex associated with the FOS mCRD domain and consisting of PABPC1, PAIP1, CSDE1/UNR and SYNCRIP. Interacts with IGF2BP2. Interacts with GTPBP1. Interacts with EIF4G1; the interaction requires RNA. Interacts with EIF3B and RPS3. In terms of processing, methylated by PRMT1, in an insulin-dependent manner. The PRMT1-mediated methylation regulates its phosphorylation. Post-translationally, arg-343 is dimethylated, probably to asymmetric dimethylarginine.

The protein resides in the nucleus. Its subcellular location is the cytoplasm. Functionally, binds with high affinity to RNA molecules that contain AU-rich elements (AREs) found within the 3'-UTR of many proto-oncogenes and cytokine mRNAs. Also binds to double- and single-stranded DNA sequences in a specific manner and functions a transcription factor. Each of the RNA-binding domains specifically can bind solely to a single-stranded non-monotonous 5'-UUAG-3' sequence and also weaker to the single-stranded 5'-TTAGGG-3' telomeric DNA repeat. Binds RNA oligonucleotides with 5'-UUAGGG-3' repeats more tightly than the telomeric single-stranded DNA 5'-TTAGGG-3' repeats. Binding of RRM1 to DNA inhibits the formation of DNA quadruplex structure which may play a role in telomere elongation. May be involved in translationally coupled mRNA turnover. Implicated with other RNA-binding proteins in the cytoplasmic deadenylation/translational and decay interplay of the FOS mRNA mediated by the major coding-region determinant of instability (mCRD) domain. May play a role in the regulation of the rhythmic expression of circadian clock core genes. Directly binds to the 3'UTR of CRY1 mRNA and induces CRY1 rhythmic translation. May also be involved in the regulation of PER2 translation. The polypeptide is Heterogeneous nuclear ribonucleoprotein D0 (Hnrnpd) (Rattus norvegicus (Rat)).